Here is a 236-residue protein sequence, read N- to C-terminus: uncharacterized protein (236 aa).

Positions 1-17 are enriched in polar residues; the sequence is MSVSSLLQPNTYNINSK. A disordered region spans residues 1–94; sequence MSVSSLLQPN…GVKGTTGGTI (94 aa). Residues 18–35 are compositionally biased toward low complexity; it reads SQSLSNTPSNPTSQTNTL. In terms of domain architecture, Collagen-like spans 58–91; sequence GPSGPKGDKGDPGSKGETGSQGIKGDPGVKGTTG.

Belongs to the sputnik virus V6 family.

This is an uncharacterized protein from Sputnik virophage.